A 229-amino-acid polypeptide reads, in one-letter code: Sodium channel modifier 1 (229 aa).

Position 2 is a phosphoserine (Ser2). A Bipartite nuclear localization signal motif is present at residues 4-20; it reads KREGDDWSQLNVLKKRR. The Matrin-type zinc finger occupies 42–74; the sequence is FACAICPHRPVLDTLAMLTAHRAGKKHLSSLKL. A Glycyl lysine isopeptide (Lys-Gly) (interchain with G-Cter in SUMO2) cross-link involves residue Lys67. Disordered regions lie at residues 80–105 and 128–187; these read QTGK…EAPL and RRKH…TKRR. Residues 82–92 are compositionally biased toward polar residues; the sequence is GKGTEQNPRQQ. Positions 157–171 are enriched in basic and acidic residues; it reads ISKEPEPRERSDAKE. Ser182 and Ser218 each carry phosphoserine. Residues 187–229 are required for interaction with LUC7L2; the sequence is RVLNHYLTLRSSGWVPDGRGRWIKDENVEFDSDEEEPPDLPLD.

As to quaternary structure, component of the minor spliceosome. Within this complex, interacts with RNF113A, as well as with SF3B1/SF3b155, SF3B2/SF3b145, SF3B3/SF3b130 and CDC5L. May interact with LUC7L2 and SNRNP70.

It is found in the nucleus. It localises to the nucleoplasm. The protein resides in the nucleus speckle. Functionally, as a component of the minor spliceosome, involved in the splicing of U12-type introns in pre-mRNAs. Plays a role in the regulation of primary cilia length and Hedgehog signaling. This chain is Sodium channel modifier 1 (Scnm1), found in Mus musculus (Mouse).